A 645-amino-acid chain; its full sequence is Sodium-dependent phosphate transporter 2 (645 aa).

Over 1–5 (MAMDE) the chain is Extracellular. A helical membrane pass occupies residues 6–26 (YLWMVILGFIIAFILAFSVGA). Residues 27–46 (NDVANSFGTAVGSGVVTLRQ) lie on the Cytoplasmic side of the membrane. Residues 47–67 (ACILASIFETTGSVLLGAKVG) form a helical membrane-spanning segment. Residues 68 to 86 (ETIRKGIIDVNLYNNTVET) lie on the Extracellular side of the membrane. The N-linked (GlcNAc...) asparagine glycan is linked to N81. A helical transmembrane segment spans residues 87 to 107 (LMAGEVSAMVGSAVWQLIASF). The Cytoplasmic portion of the chain corresponds to 108 to 109 (LR). The chain crosses the membrane as a helical span at residues 110 to 130 (FPISGTHCIVGATIGFSLVAI). Residues 131 to 142 (GTQGVQWMELVK) lie on the Extracellular side of the membrane. The helical transmembrane segment at 143-163 (IVASWFISPLLSGFMSGVLFV) threads the bilayer. Topologically, residues 164-190 (LIRMFILKKEDPVPNGLRALPVFYAAT) are cytoplasmic. The helical transmembrane segment at 191 to 211 (IAINVFSIMYTGAPVMGLVLP) threads the bilayer. Residues 212–213 (MW) lie on the Extracellular side of the membrane. Residues 214-234 (AIALISFGVALLFALFVWLFV) form a helical membrane-spanning segment. The Cytoplasmic segment spans residues 235 to 475 (CPWMRRKITG…EEKEEKDSPE (241 aa)). Residues S253, S256, S259, S268, S316, and S379 each carry the phosphoserine modification. The segment at 275–320 (PGAKAHDDSTVPLTGSAADPSGTSESMSGGHHPRAPYGRALSMTHG) is disordered. Residues 448–471 (RLAPPLAEPEPPRDDPADEEKEEK) are disordered. The chain crosses the membrane as a helical span at residues 476–496 (VHLLFHFLQVLTACFGSFAHG). Residues 497 to 523 (GNDVSNAIGPLVALWLIYEQGAVLQEA) are Extracellular-facing. A helical membrane pass occupies residues 524–544 (ATPVWLLFYGGVGICTGLWVW). Topologically, residues 545 to 564 (GRRVIQTMGKDLTPITPSSG) are cytoplasmic. Residues 565-579 (FTIELASAFTVVIAS) form a helical membrane-spanning segment. Over 580-586 (NIGLPVS) the chain is Extracellular. The helical transmembrane segment at 587–602 (TTHCKVGSVVAVGWIR) threads the bilayer. Residues 603 to 614 (SRKAVDWRLFRN) are Cytoplasmic-facing. Residues 615–635 (IFVAWFVTVPVAGLFSAAIMA) traverse the membrane as a helical segment. Over 636–645 (LLIHGILPFV) the chain is Extracellular.

It belongs to the inorganic phosphate transporter (PiT) (TC 2.A.20) family. As to quaternary structure, homodimer.

It is found in the cell membrane. The protein localises to the apical cell membrane. The enzyme catalyses 2 Na(+)(out) + phosphate(out) = 2 Na(+)(in) + phosphate(in). Its function is as follows. Sodium-phosphate symporter which preferentially transports the monovalent form of phosphate with a stoichiometry of two sodium ions per phosphate ion. Plays a critical role in the determination of bone quality and strength by providing phosphate for bone mineralization. Required to maintain normal cerebrospinal fluid phosphate levels. Mediates phosphate-induced calcification of vascular smooth muscle cells (VCMCs) and can functionally compensate for loss of SLC20A1 in VCMCs. In Bos taurus (Bovine), this protein is Sodium-dependent phosphate transporter 2 (SLC20A2).